The primary structure comprises 520 residues: Glutamyl-tRNA(Gln) amidotransferase subunit A (520 aa).

Residues Lys-80 and Ser-155 each act as charge relay system in the active site. The Acyl-ester intermediate role is filled by Ser-179.

This sequence belongs to the amidase family. GatA subfamily. Heterotrimer of A, B and C subunits.

The catalysed reaction is L-glutamyl-tRNA(Gln) + L-glutamine + ATP + H2O = L-glutaminyl-tRNA(Gln) + L-glutamate + ADP + phosphate + H(+). In terms of biological role, allows the formation of correctly charged Gln-tRNA(Gln) through the transamidation of misacylated Glu-tRNA(Gln) in organisms which lack glutaminyl-tRNA synthetase. The reaction takes place in the presence of glutamine and ATP through an activated gamma-phospho-Glu-tRNA(Gln). This is Glutamyl-tRNA(Gln) amidotransferase subunit A from Renibacterium salmoninarum (strain ATCC 33209 / DSM 20767 / JCM 11484 / NBRC 15589 / NCIMB 2235).